The chain runs to 358 residues: Biotin synthase (358 aa).

The Radical SAM core domain occupies 50–277 (NEVQVSTLCS…KSHVRLSAGR (228 aa)). Residues C65, C69, and C72 each coordinate [4Fe-4S] cluster. The [2Fe-2S] cluster site is built by C109, C140, C200, and R272.

Belongs to the radical SAM superfamily. Biotin synthase family. As to quaternary structure, homodimer. [4Fe-4S] cluster serves as cofactor. [2Fe-2S] cluster is required as a cofactor.

It carries out the reaction (4R,5S)-dethiobiotin + (sulfur carrier)-SH + 2 reduced [2Fe-2S]-[ferredoxin] + 2 S-adenosyl-L-methionine = (sulfur carrier)-H + biotin + 2 5'-deoxyadenosine + 2 L-methionine + 2 oxidized [2Fe-2S]-[ferredoxin]. The protein operates within cofactor biosynthesis; biotin biosynthesis; biotin from 7,8-diaminononanoate: step 2/2. Functionally, catalyzes the conversion of dethiobiotin (DTB) to biotin by the insertion of a sulfur atom into dethiobiotin via a radical-based mechanism. The protein is Biotin synthase of Cellvibrio japonicus (strain Ueda107) (Pseudomonas fluorescens subsp. cellulosa).